Consider the following 609-residue polypeptide: Dihydroxyacetone kinase (609 aa).

The 348-residue stretch at 8–355 folds into the DhaK domain; it reads YKQDLVHAHL…LDYPTKVPGW (348 aa). Residues 53-56, K104, and D109 each bind substrate; that span reads GSGH. Residue H232 is the Tele-hemiaminal-histidine intermediate of the active site. The 209-residue stretch at 392–600 folds into the DhaL domain; sequence STVKAVLESG…LAALVDGFAE (209 aa). ATP contacts are provided by residues 421–424, 467–468, 523–524, and 585–587; these read DGDC, TS, TL, and DPG.

It belongs to the dihydroxyacetone kinase (DAK) family.

The enzyme catalyses dihydroxyacetone + ATP = dihydroxyacetone phosphate + ADP + H(+). It catalyses the reaction D-glyceraldehyde + ATP = D-glyceraldehyde 3-phosphate + ADP + H(+). Its pathway is polyol metabolism; glycerol fermentation; glycerone phosphate from glycerol (oxidative route): step 2/2. Catalyzes both the phosphorylation of dihydroxyacetone and of glyceraldehyde. This chain is Dihydroxyacetone kinase (DAK), found in Pichia angusta (Yeast).